Reading from the N-terminus, the 348-residue chain is D-alanine--D-alanine ligase (348 aa).

The 203-residue stretch at 132 to 334 (KRVLESIGIP…YPDLIEELVT (203 aa)) folds into the ATP-grasp domain. 162 to 217 (LARLTFPIFVKPANMGSSVGISKAQTKVELRKAIQLALTYDSRVLIEQGVIAREIE) is a binding site for ATP. Mg(2+) contacts are provided by aspartate 288, glutamate 301, and asparagine 303.

It belongs to the D-alanine--D-alanine ligase family. Mg(2+) serves as cofactor. Mn(2+) is required as a cofactor.

Its subcellular location is the cytoplasm. The enzyme catalyses 2 D-alanine + ATP = D-alanyl-D-alanine + ADP + phosphate + H(+). It functions in the pathway cell wall biogenesis; peptidoglycan biosynthesis. Cell wall formation. In Streptococcus pyogenes serotype M4 (strain MGAS10750), this protein is D-alanine--D-alanine ligase.